The chain runs to 328 residues: Probable tRNA pseudouridine synthase B (328 aa).

Aspartate 71 acts as the Nucleophile in catalysis. The 76-residue stretch at 238 to 313 (LPKIWVRDSA…LVARVDRVIM (76 aa)) folds into the PUA domain.

This sequence belongs to the pseudouridine synthase TruB family. Type 2 subfamily.

It carries out the reaction uridine(55) in tRNA = pseudouridine(55) in tRNA. Could be responsible for synthesis of pseudouridine from uracil-55 in the psi GC loop of transfer RNAs. In Pyrobaculum islandicum (strain DSM 4184 / JCM 9189 / GEO3), this protein is Probable tRNA pseudouridine synthase B.